The sequence spans 505 residues: uncharacterized protein (505 aa).

The Radical SAM core domain occupies 193–440; that stretch reads CTNKKCNLCE…LEIKKKYIGR (248 aa). Cys-208, Cys-216, and Cys-219 together coordinate [4Fe-4S] cluster. Residues 435-499 form the TRAM domain; it reads KKYIGRVLEV…EKYLEGRILK (65 aa).

[4Fe-4S] cluster serves as cofactor.

This is an uncharacterized protein from Methanocaldococcus jannaschii (strain ATCC 43067 / DSM 2661 / JAL-1 / JCM 10045 / NBRC 100440) (Methanococcus jannaschii).